The chain runs to 2586 residues: MTTSTLLFVLAFVAGGLAAPWGADVPRCSTECPVTGSPKLAYQPDKTYAYAYSGKSTVQLKGVDNGDTETEWTAGVDLTWISPCDMAISFRNTKMDGARGPTAARTLERYPLVVAVVDGRVQHVCAHPEDEAWAINLKKGVASAFQNSIPSLSAVSSGITVTETDVVGKCPTKYEIETEGEKVIVVKEKNHRHCQERYPTPAALPAPWLKAPLPIEESKSQCRQEIANGIYTAITCQDKNIVRPAIGIYKYVEASQYSTLRFISESSDTSAISGIPSGELNIESLLYNHETMKDPQLAPELDELMKEICDKTKDTVEAEAGALVAKALHVLRRIPDTVVVETAQKVRQGHYCSDSARLESIFLDAVAFIHESGAVKVMVNEIENGRATGGRLALYTAALYLIPRPNIEAVKALTPLFESPRPMPSLLLAAATMVNHYCRHTPACYEKAPVARIAEILANRVQTHCSPSAGVEDNEVALAIFKTIGNMGVATPAVTRAAVHCIEVEGLETSVRVAAAEAFRQANCFRPAVEKLVDIAVRPAFETEVRIASYLAAVRCAEQEHLETIIEKISKEENTQVRGFVLGHLINIQESTCPAKENLRYLLANVIPTDFERDFRKFSRNIDVAYHAPAFGMGAGLESNIIYAPGSFVPRAVNLKMKADVDETHMDIAEIGARFVGIESIIEEPLGPQGYLRTATFGKIMEDITGFAGEKGYKVMEQLKHTLRTRRSIDSSVIADFFGKLYGKSRSHTHAELFARFMGHEITYADVAGSLKGVTADTLIETFFSFFENSLEHMKDLNLNTARTAQLSMDYSLPTIQGTPLRLRLAGTAVAGLKMEGNVNIAQILSDLGNSQTGVKFFPGLSVHATGFVGFDWLLARVGIEMQNTISSATGAAIKIRTTENKKIEMELEVPEKMELLNIKAETYLVKAVGKKMTEISPSSMRDVRIQRNSCIGALEPVFGLKVCYDMNIPDVFRANALPLGEPAIAKLYVEKADPSMRGYLVTAAIKNKRGNKVIKMNVEAAGASTPRRAEMTLSYTKEEGSHIVSAKLDSSSIAAGVWTTLTNEQGHKAMETYVNFNYGQIAISRGIKLEAIAREASVGEEFQVNVFSSGTRSFPSESHIVEARFIKKTSGPEFNVDVICRTKNALAELFDLNIEVGADFMKFSPKNLYPARYIPKTRIVLPVNLRKMEINAATAAWKLISYIRAGSQSGGSREFISALKLAKGRKDFISVQATHTIEGTFPQNIIIKNVATAEVGRSSYKAMYDLFYHSEKMGASLEVLQAAGNEKVAHLEAIYELSGSKYCTKFLAEIPGYIQPVKVEAGIEQGAEGRYTLESAITYGQRTVLEASGPIMARFSSKIAKLQANIKVRAMASEPYIIGANVAFGSKKQMIAMEIKGRSEAVIGLEWKMVRESSEKTTVGIVFVLPALIENKIDAEITDGLIHVSFNNLVLPKTSSRRRVKGFADVHIAEKKANVEFSWDADNAPEKKLVLDASLISSSANPGHAEIHGNIVIAGEPFHAKLVLTAANLVEHMEGENGFKLILTTPSQKTIVLGASCDVQVAGATTKVISTVEYKNMKDRKYKYASVIAYEKLGGPFDYAVEAKVTYKQPGTAEIKLGTAVKHHWTPEEHVVAVRVEADAPILKTPATIEFSIHNAPNAFVGFCKIERNAPATVFEWNVQITPEGGIEAVEAGVDMKAIIEVLKIVHAAATLQEESYETYGPHTSQYQYRFTRPSPTSYTMQMRTPTRTMEGRAKLSPRESGIKFYPNKGKTESKYEIGYKANHEGRWGGHASKLEVRMNHPVLPKPIMAAVQYTVAEETTKGTIELDIFPEEANKITGSLETQRISENAIRAEAFLTSRMLKVNPKAIITAAYAPETVAFDVVFHKTPSAAPIFAIAAKYDKTAAHNAAATFTVKMEERPVFEITAVTEPEEAATCNGIRMRAVAYAATFGKYNVISKMCRPAFIEVTAMRPGGAKEYIAKLGLRYPDAAEAGVYVASGRAGETHGVAVAAVKLASPTMLKVEMAYEPQEAEAIINEMTEEFEKIAASFTSVEMEVVEFLKQEAAAKGIQFPSSQLVNLLGVAKEEIAEIYRDIVSEAIIFDTEILGDILGSPVVSFISRVYFGVWSEIIHLQHHLSVSLIQTIERFQQELGSISEILMEVVMTAARMAETGEVPGVVFDALEEIKATKVFRIVRREVDAILEEYPEEYEAVKHIVHNVVAILKRDVGIVRERLMEIPAVLKIIDYTMYHFHSERAFAAEAEKLVSLMLNELLFVSMEREGNGVAVRIPLHRPLYSLTQVAQEAVPNPVTMLENLIFAYVDYIPIPVSDAIWAFYNLVPRYITDVLPPYPRTATVVGGSEILTFSGLVVRAPRSPCKVVLAAHGSHRLMMSHPQASAPAQFELKTPAATVMIKPDFEVVVNGQPLAGSQQTIGNVRIVNTAEHIEVGCPLMKVVVAKAGEAVAVEASGWVFGRVAGLLGPNNGEIAHDRLMPSGAAASNPRDLVAAWQEDRQCSTPEVPRAETTVARLIQCEALLGIRSRCNPVVHPQPFIKMCHAAHKACDAAQAYRTVCSLRGVGEVFPLGC.

Positions 1 to 18 (MTTSTLLFVLAFVAGGLA) are cleaved as a signal peptide. The Vitellogenin domain maps to 42 to 653 (YQPDKTYAYA…APGSFVPRAV (612 aa)). Disulfide bonds link cysteine 170–cysteine 194 and cysteine 2378–cysteine 2515. The 164-residue stretch at 2353–2516 (RTATVVGGSE…AAWQEDRQCS (164 aa)) folds into the VWFD domain.

Glycosylated. Post-translationally, may be modified covalently by lipidation. Expressed in the ovary and hepatopancrease of vitellogenic females. Not expressed in the muscle, heart and intestine of female or in the hepatopancrease of the male. Detected in the ovary and hemolymph of female (at protein level). Not detected in the female hepatopancreas or in the male hemolymph and testis (at protein level).

Functionally, precursor of the egg-yolk proteins that are sources of nutrients during embryonic development. The chain is Vitellogenin from Penaeus merguiensis (Banana prawn).